Consider the following 403-residue polypeptide: Tyrosine--tRNA ligase (403 aa).

A 'HIGH' region motif is present at residues Pro43–His52. The short motif at Lys227–Ser231 is the 'KMSKS' region element. Residue Lys230 participates in ATP binding. One can recognise an S4 RNA-binding domain in the interval Leu338 to Ile399.

The protein belongs to the class-I aminoacyl-tRNA synthetase family. TyrS type 2 subfamily. Homodimer.

It is found in the cytoplasm. The enzyme catalyses tRNA(Tyr) + L-tyrosine + ATP = L-tyrosyl-tRNA(Tyr) + AMP + diphosphate + H(+). In terms of biological role, catalyzes the attachment of tyrosine to tRNA(Tyr) in a two-step reaction: tyrosine is first activated by ATP to form Tyr-AMP and then transferred to the acceptor end of tRNA(Tyr). The protein is Tyrosine--tRNA ligase of Nitrosospira multiformis (strain ATCC 25196 / NCIMB 11849 / C 71).